The sequence spans 184 residues: dITP/XTP pyrophosphatase (184 aa).

Residue 7–12 (TSNPGK) coordinates substrate. Positions 36 and 65 each coordinate Mg(2+). The Proton acceptor role is filled by aspartate 65. Substrate is bound by residues serine 66, 139-142 (FGFD), lysine 162, and 167-168 (HR).

The protein belongs to the HAM1 NTPase family. As to quaternary structure, homodimer. It depends on Mg(2+) as a cofactor.

The enzyme catalyses XTP + H2O = XMP + diphosphate + H(+). It catalyses the reaction dITP + H2O = dIMP + diphosphate + H(+). The catalysed reaction is ITP + H2O = IMP + diphosphate + H(+). In terms of biological role, pyrophosphatase that catalyzes the hydrolysis of nucleoside triphosphates to their monophosphate derivatives, with a high preference for the non-canonical purine nucleotides XTP (xanthosine triphosphate), dITP (deoxyinosine triphosphate) and ITP. Seems to function as a house-cleaning enzyme that removes non-canonical purine nucleotides from the nucleotide pool, thus preventing their incorporation into DNA/RNA and avoiding chromosomal lesions. This chain is dITP/XTP pyrophosphatase, found in Thermococcus kodakarensis (strain ATCC BAA-918 / JCM 12380 / KOD1) (Pyrococcus kodakaraensis (strain KOD1)).